The following is a 398-amino-acid chain: Tryptophan synthase beta chain (398 aa).

K88 is modified (N6-(pyridoxal phosphate)lysine).

It belongs to the TrpB family. In terms of assembly, tetramer of two alpha and two beta chains. Requires pyridoxal 5'-phosphate as cofactor.

The catalysed reaction is (1S,2R)-1-C-(indol-3-yl)glycerol 3-phosphate + L-serine = D-glyceraldehyde 3-phosphate + L-tryptophan + H2O. The protein operates within amino-acid biosynthesis; L-tryptophan biosynthesis; L-tryptophan from chorismate: step 5/5. In terms of biological role, the beta subunit is responsible for the synthesis of L-tryptophan from indole and L-serine. The chain is Tryptophan synthase beta chain from Mannheimia succiniciproducens (strain KCTC 0769BP / MBEL55E).